Reading from the N-terminus, the 1318-residue chain is Major tegument protein (1318 aa).

Belongs to the herpesviridae MTP family. Interacts with host DAXX; this interaction disrupts the chromatin remodeling complex ATRX:DAXX and thus allows viral transcription. Interacts with host SMC6; this interaction targets SMC5-SMC6 complex for proteasomal degradation.

The protein localises to the virion tegument. The protein resides in the host nucleus. Its function is as follows. Tegument protein that plays a role in the inhibition of host intrinsic defenses to promote viral early gene activation. Interacts with host DAXX and thereby disrupts the complex between DAXX and ATRX. Suppresses the DAXX-ATRX dependent deposition of histone H3.3 on viral chromatin allowing viral transcription. Targets also host SMC5/6 for proteasomal degradation in a CUL7 and calpain-dependent manner to support nuclear membrane-less replication compartment formation and lytic virus replication. The chain is Major tegument protein from Homo sapiens (Human).